The sequence spans 934 residues: Isoleucine--tRNA ligase (934 aa).

Residues 58-68 carry the 'HIGH' region motif; sequence PYANGEIHIGH. Glutamate 559 serves as a coordination point for L-isoleucyl-5'-AMP. The 'KMSKS' region motif lies at 600 to 604; it reads KMSKS. Lysine 603 is an ATP binding site. Zn(2+)-binding residues include cysteine 897, cysteine 900, cysteine 917, and cysteine 920.

It belongs to the class-I aminoacyl-tRNA synthetase family. IleS type 1 subfamily. In terms of assembly, monomer. It depends on Zn(2+) as a cofactor.

It localises to the cytoplasm. The enzyme catalyses tRNA(Ile) + L-isoleucine + ATP = L-isoleucyl-tRNA(Ile) + AMP + diphosphate. Its function is as follows. Catalyzes the attachment of isoleucine to tRNA(Ile). As IleRS can inadvertently accommodate and process structurally similar amino acids such as valine, to avoid such errors it has two additional distinct tRNA(Ile)-dependent editing activities. One activity is designated as 'pretransfer' editing and involves the hydrolysis of activated Val-AMP. The other activity is designated 'posttransfer' editing and involves deacylation of mischarged Val-tRNA(Ile). The polypeptide is Isoleucine--tRNA ligase (Teredinibacter turnerae (strain ATCC 39867 / T7901)).